Consider the following 512-residue polypeptide: Sodium/proline symporter (512 aa).

A run of 13 helical transmembrane segments spans residues 16 to 36, 54 to 74, 85 to 105, 139 to 159, 174 to 194, 200 to 220, 240 to 260, 286 to 306, 327 to 347, 381 to 401, 410 to 430, 438 to 458, and 467 to 487; these read WQTYIMIAVYFLILIVIGFYG, IGPYITALSAGASDMSGWMIM, LSAMWITIGLTLGAYINYFVV, IISGLIIVVFFTLYTHSGFVS, FGLILVAFIVIFYTFFGGYLA, FFQGVIMLIAMVMVPIVAMMN, LFKGLSFIGTISLFSWGLGYF, ISWMAVGLLGAVAVGLTGIAF, VLFHPLVGGFLLAAILAAIMS, FVMIGRLSVLVVAIVAIAIAW, LVGNAWAGFGASFSPLVLFAL, AGAVSGMVSGALVVIVWIAWI, and IFGLYEIIPGFIVSVIVTYVV.

The protein belongs to the sodium:solute symporter (SSF) (TC 2.A.21) family.

The protein localises to the cell membrane. The enzyme catalyses L-proline(in) + Na(+)(in) = L-proline(out) + Na(+)(out). Its function is as follows. Catalyzes the sodium-dependent uptake of extracellular L-proline. Since most S.aureus strains are L-proline auxotrophs, this transporter may aid the bacterial persistence during an infection of tissues with low proline concentrations. This is Sodium/proline symporter (putP) from Staphylococcus aureus (strain bovine RF122 / ET3-1).